The primary structure comprises 257 residues: UPF0259 membrane protein WIGBR3650 (257 aa).

6 helical membrane-spanning segments follow: residues I23–P43, L89–I109, I122–L142, A148–I168, I190–I210, and V223–Y243.

It belongs to the UPF0259 family.

The protein resides in the cell membrane. This chain is UPF0259 membrane protein WIGBR3650, found in Wigglesworthia glossinidia brevipalpis.